The primary structure comprises 754 residues: Polycomb protein mes-3 (754 aa).

Residues 1 to 83 (MTPATAEVKV…PTKLENIQKT (83 aa)) are disordered. The span at 31 to 40 (ARREEEKENL) shows a compositional bias: basic and acidic residues. A compositionally biased stretch (low complexity) spans 51–61 (SSEAGSSRESS).

As to quaternary structure, forms a heterotrimeric complex with the Polycomb proteins mes-2 and mes-3. Does not interact with mes-4. Interacts with nyfa-1. As to expression, in adults, it is predominantly expressed in the germline, and weakly expressed in intestinal cells.

It is found in the nucleus. In terms of biological role, component of a Polycomb group (PcG) complex. PcG proteins act by forming multiprotein complexes, which are required to maintain the transcriptionally repressive state of homeotic genes throughout development. In association with the nfya-1-NF-Y complex, may play a role in repressing the expression of the homeobox protein egl-5 in tissues such as the head. PcG proteins are not required to initiate repression, but to maintain it during later stages of development. The mes-2/mes-3/mes-6 complex may participate in the global inactivation of the X chromosomes in germline cells. The complex may act via methylation of histone H3 'Lys-27', rendering chromatin heritably changed in its expressibility. This complex is required to exclude mes-4 from the inactivated X-chromosomes in germline cells. In Caenorhabditis elegans, this protein is Polycomb protein mes-3.